The primary structure comprises 248 residues: Ureidoacrylate amidohydrolase RutB (248 aa).

The Proton acceptor role is filled by Asp41. Lys150 is a catalytic residue. Residue Cys183 is the Nucleophile of the active site.

It belongs to the isochorismatase family. RutB subfamily.

It carries out the reaction (Z)-3-ureidoacrylate + H2O + H(+) = (Z)-3-aminoacrylate + NH4(+) + CO2. The catalysed reaction is (Z)-3-ureidoacrylate + H2O = (Z)-3-aminoacrylate + carbamate + H(+). The enzyme catalyses (Z)-2-methylureidoacrylate + H2O + H(+) = (Z)-2-methylaminoacrylate + NH4(+) + CO2. Functionally, hydrolyzes ureidoacrylate to form aminoacrylate and carbamate. The carbamate hydrolyzes spontaneously, thereby releasing one of the nitrogen atoms of the pyrimidine ring as ammonia and one of its carbon atoms as CO2. The protein is Ureidoacrylate amidohydrolase RutB of Stutzerimonas stutzeri (strain A1501) (Pseudomonas stutzeri).